Consider the following 122-residue polypeptide: Large ribosomal subunit protein uL14 (122 aa).

This sequence belongs to the universal ribosomal protein uL14 family. In terms of assembly, part of the 50S ribosomal subunit. Forms a cluster with proteins L3 and L19. In the 70S ribosome, L14 and L19 interact and together make contacts with the 16S rRNA in bridges B5 and B8.

Its function is as follows. Binds to 23S rRNA. Forms part of two intersubunit bridges in the 70S ribosome. This chain is Large ribosomal subunit protein uL14, found in Rickettsia bellii (strain OSU 85-389).